A 139-amino-acid chain; its full sequence is Plastocyanin (139 aa).

The first 34 residues, 1–34, serve as a signal peptide directing secretion; it reads MKLIAQISRSLSLALFALVLMVGSFVAVMSPAAA. Positions 35-139 constitute a Plastocyanin-like domain; that stretch reads ETFTVKMGAD…GMVGKITVEG (105 aa). Cu cation is bound by residues His73, Cys123, His126, and Met131.

This sequence belongs to the plastocyanin family. Cu(2+) serves as cofactor.

It is found in the cellular thylakoid membrane. Functionally, participates in electron transfer between P700 and the cytochrome b6-f complex in photosystem I. The chain is Plastocyanin (petE) from Leptolyngbya laminosa (Phormidium laminosum).